A 179-amino-acid polypeptide reads, in one-letter code: 3-hydroxyanthranilate 3,4-dioxygenase (179 aa).

R47 provides a ligand contact to O2. 3 residues coordinate Fe cation: H51, E57, and H96. E57 contacts substrate. Substrate is bound by residues R100 and E110. Positions 125, 128, 162, and 165 each coordinate Fe cation.

Belongs to the 3-HAO family. Fe(2+) serves as cofactor.

The enzyme catalyses 3-hydroxyanthranilate + O2 = (2Z,4Z)-2-amino-3-carboxymuconate 6-semialdehyde. It functions in the pathway cofactor biosynthesis; NAD(+) biosynthesis; quinolinate from L-kynurenine: step 3/3. Its function is as follows. Catalyzes the oxidative ring opening of 3-hydroxyanthranilate to 2-amino-3-carboxymuconate semialdehyde, which spontaneously cyclizes to quinolinate. The sequence is that of 3-hydroxyanthranilate 3,4-dioxygenase from Bacillus cereus (strain 03BB102).